The primary structure comprises 439 residues: Xylose isomerase (439 aa).

Residues H101 and D104 contribute to the active site. Mg(2+) is bound by residues E232, E268, H271, D296, D307, D309, and D339.

Belongs to the xylose isomerase family. In terms of assembly, homotetramer. Requires Mg(2+) as cofactor.

The protein resides in the cytoplasm. It catalyses the reaction alpha-D-xylose = alpha-D-xylulofuranose. The polypeptide is Xylose isomerase (Pseudoalteromonas atlantica (strain T6c / ATCC BAA-1087)).